We begin with the raw amino-acid sequence, 339 residues long: Carboxyvinyl-carboxyphosphonate phosphorylmutase, chloroplastic (339 aa).

A chloroplast-targeting transit peptide spans 1–30 (MSMLMAVKTTSLCCSSLNLTASPTFRRNPR).

Belongs to the isocitrate lyase/PEP mutase superfamily.

The protein resides in the plastid. The protein localises to the chloroplast. It catalyses the reaction 1-carboxyvinyl carboxyphosphonate + H(+) = 3-(hydrohydroxyphosphoryl)pyruvate + CO2. The protein is Carboxyvinyl-carboxyphosphonate phosphorylmutase, chloroplastic of Arabidopsis thaliana (Mouse-ear cress).